Here is a 113-residue protein sequence, read N- to C-terminus: UPF0482 protein YnfB (113 aa).

The N-terminal stretch at 1-28 is a signal peptide; the sequence is MKITLSKRIGLLAFLLPCALALSTTVHA.

The protein belongs to the UPF0482 family.

The polypeptide is UPF0482 protein YnfB (Shigella dysenteriae serotype 1 (strain Sd197)).